A 488-amino-acid polypeptide reads, in one-letter code: TOX high mobility group box family member 2 (488 aa).

Positions 76-114 (YEIPPITPPNLPEPSLLHLGDHEASYHSLCHGLTPNGLL) are required for transcriptional activation. Disordered stretches follow at residues 192-258 (RSSI…PQKP), 293-328 (WDSL…KQPM), and 363-473 (SLLP…ECGI). Positions 204-216 (GSKSATPSPSSST) are enriched in low complexity. Residues 222 to 239 (EVHFKISGEKRPSADPGK) show a composition bias toward basic and acidic residues. The short motif at 223-252 (VHFKISGEKRPSADPGKKAKNPKKKKKKDP) is the Nuclear localization signal element. Residues 240–250 (KAKNPKKKKKK) show a composition bias toward basic residues. Residues 255 to 323 (PQKPVSAYAL…QANPPAKMLP (69 aa)) constitute a DNA-binding region (HMG box). The segment covering 302-316 (QSSPDQGETKSTQAN) has biased composition (polar residues). The span at 443 to 460 (PSSSGSCSPGPSNPTSSG) shows a compositional bias: low complexity.

It is found in the nucleus. Functionally, putative transcriptional activator involved in the hypothalamo-pituitary-gonadal system. The sequence is that of TOX high mobility group box family member 2 (TOX2) from Homo sapiens (Human).